The primary structure comprises 345 residues: Leucine zipper protein 2 (345 aa).

An N-terminal signal peptide occupies residues 1–19; the sequence is MKFNAAHYLLPLLPALVLS. Positions 16-211 form a coiled coil; the sequence is LVLSTRQDYE…QMKAMKETVQ (196 aa). Residue asparagine 133 is glycosylated (N-linked (GlcNAc...) asparagine). Residues 164 to 192 form a leucine-zipper region; that stretch reads LRYGKKDLLFKAQQLTELEQKLAVAKNEL. Residues 223-345 form a disordered region; the sequence is PPLSLMPSNP…GTPAREEKLL (123 aa). Basic and acidic residues predominate over residues 261–277; it reads GHHDSSQVQATKEESRR. Residues 298–313 are compositionally biased toward polar residues; sequence PQSNSTAESELTTQKL. Asparagine 301 is a glycosylation site (N-linked (GlcNAc...) asparagine).

In terms of tissue distribution, expression found only in the brain and spinal cord.

The protein localises to the secreted. This chain is Leucine zipper protein 2 (Luzp2), found in Mus musculus (Mouse).